Here is a 100-residue protein sequence, read N- to C-terminus: Small ribosomal subunit protein uS14 (100 aa).

The protein belongs to the universal ribosomal protein uS14 family. In terms of assembly, part of the 30S ribosomal subunit. Contacts proteins S3 and S10.

Binds 16S rRNA, required for the assembly of 30S particles and may also be responsible for determining the conformation of the 16S rRNA at the A site. The protein is Small ribosomal subunit protein uS14 of Acaryochloris marina (strain MBIC 11017).